We begin with the raw amino-acid sequence, 341 residues long: Ribosomal RNA small subunit methyltransferase H (341 aa).

S-adenosyl-L-methionine is bound by residues 47–49 (GGY), D64, F91, D109, and Q116.

Belongs to the methyltransferase superfamily. RsmH family.

It localises to the cytoplasm. The enzyme catalyses cytidine(1402) in 16S rRNA + S-adenosyl-L-methionine = N(4)-methylcytidine(1402) in 16S rRNA + S-adenosyl-L-homocysteine + H(+). Specifically methylates the N4 position of cytidine in position 1402 (C1402) of 16S rRNA. The chain is Ribosomal RNA small subunit methyltransferase H from Rhizobium etli (strain ATCC 51251 / DSM 11541 / JCM 21823 / NBRC 15573 / CFN 42).